A 436-amino-acid polypeptide reads, in one-letter code: Phosphomethylpyrimidine synthase (436 aa).

Substrate-binding positions include Asn69, Met98, Tyr127, His163, 185 to 187 (SRG), 226 to 229 (DACR), and Glu265. His269 serves as a coordination point for Zn(2+). Tyr292 provides a ligand contact to substrate. His333 is a Zn(2+) binding site. 3 residues coordinate [4Fe-4S] cluster: Cys409, Cys412, and Cys416.

It belongs to the ThiC family. The cofactor is [4Fe-4S] cluster.

The enzyme catalyses 5-amino-1-(5-phospho-beta-D-ribosyl)imidazole + S-adenosyl-L-methionine = 4-amino-2-methyl-5-(phosphooxymethyl)pyrimidine + CO + 5'-deoxyadenosine + formate + L-methionine + 3 H(+). The protein operates within cofactor biosynthesis; thiamine diphosphate biosynthesis. Its function is as follows. Catalyzes the synthesis of the hydroxymethylpyrimidine phosphate (HMP-P) moiety of thiamine from aminoimidazole ribotide (AIR) in a radical S-adenosyl-L-methionine (SAM)-dependent reaction. The polypeptide is Phosphomethylpyrimidine synthase (Clostridium perfringens (strain ATCC 13124 / DSM 756 / JCM 1290 / NCIMB 6125 / NCTC 8237 / Type A)).